A 636-amino-acid polypeptide reads, in one-letter code: 1-deoxy-D-xylulose-5-phosphate synthase (636 aa).

Thiamine diphosphate is bound by residues His72 and 113-115; that span reads GHA. Asp144 lines the Mg(2+) pocket. Thiamine diphosphate is bound by residues 145 to 146, Asn174, Tyr287, and Glu370; that span reads GS. Asn174 is a Mg(2+) binding site.

It belongs to the transketolase family. DXPS subfamily. As to quaternary structure, homodimer. The cofactor is Mg(2+). Thiamine diphosphate is required as a cofactor.

The enzyme catalyses D-glyceraldehyde 3-phosphate + pyruvate + H(+) = 1-deoxy-D-xylulose 5-phosphate + CO2. Its pathway is metabolic intermediate biosynthesis; 1-deoxy-D-xylulose 5-phosphate biosynthesis; 1-deoxy-D-xylulose 5-phosphate from D-glyceraldehyde 3-phosphate and pyruvate: step 1/1. Its function is as follows. Catalyzes the acyloin condensation reaction between C atoms 2 and 3 of pyruvate and glyceraldehyde 3-phosphate to yield 1-deoxy-D-xylulose-5-phosphate (DXP). The sequence is that of 1-deoxy-D-xylulose-5-phosphate synthase from Synechococcus elongatus (strain ATCC 33912 / PCC 7942 / FACHB-805) (Anacystis nidulans R2).